A 446-amino-acid polypeptide reads, in one-letter code: DDB1- and CUL4-associated factor 12 (446 aa).

A compositionally biased stretch (basic residues) spans 1-12 (MTRRAVSRKRRA). The segment at 1 to 33 (MTRRAVSRKRRAAPGTGPGEQSDWDHSAHKRKR) is disordered. WD repeat units lie at residues 132 to 173 (SHQS…PVCV), 177 to 215 (GHNDWIFSIAWISDTMAVSGSRDGSMALWEMTEEILSKS), 245 to 284 (PVNCKVRALAFNSKNKELGAVSLDGFFHLWKAELTLAKLL), and 333 to 370 (EQGSGIRSVSFYEHIVTVGTGQGALLFYDIRAQRFLED).

It belongs to the WD repeat DCAF12 family. Component of the DCX(DCAF12) E3 ubiquitin ligase complex, at least composed of cul4 (cul4a or cul4b), ddb1, dcaf12 and rbx1.

It localises to the cytoplasm. The protein localises to the cytoskeleton. It is found in the microtubule organizing center. The protein resides in the centrosome. Its subcellular location is the nucleus. The protein operates within protein modification; protein ubiquitination. In terms of biological role, substrate-recognition component of a DCX (DDB1-CUL4-X-box) E3 ubiquitin-protein ligase complex of the DesCEND (destruction via C-end degrons) pathway, which recognizes a C-degron located at the extreme C terminus of target proteins, leading to their ubiquitination and degradation. The C-degron recognized by the DesCEND pathway is usually a motif of less than ten residues and can be present in full-length proteins, truncated proteins or proteolytically cleaved forms. The DCX(DCAF12) complex specifically recognizes proteins with a diglutamate (Glu-Glu) at the C-terminus leading to their ubiquitination and degradation. Also directly recognizes the C-terminal glutamate-leucine (Glu-Leu) degron as an alternative degron in proteins leading to their ubiquitination and degradation. The protein is DDB1- and CUL4-associated factor 12 of Xenopus tropicalis (Western clawed frog).